The sequence spans 253 residues: Ubiquinone/menaquinone biosynthesis C-methyltransferase UbiE (253 aa).

Residues threonine 76, aspartate 97, and 125–126 (NA) each bind S-adenosyl-L-methionine.

The protein belongs to the class I-like SAM-binding methyltransferase superfamily. MenG/UbiE family.

It catalyses the reaction a 2-demethylmenaquinol + S-adenosyl-L-methionine = a menaquinol + S-adenosyl-L-homocysteine + H(+). The catalysed reaction is a 2-methoxy-6-(all-trans-polyprenyl)benzene-1,4-diol + S-adenosyl-L-methionine = a 5-methoxy-2-methyl-3-(all-trans-polyprenyl)benzene-1,4-diol + S-adenosyl-L-homocysteine + H(+). It functions in the pathway quinol/quinone metabolism; menaquinone biosynthesis; menaquinol from 1,4-dihydroxy-2-naphthoate: step 2/2. The protein operates within cofactor biosynthesis; ubiquinone biosynthesis. Functionally, methyltransferase required for the conversion of demethylmenaquinol (DMKH2) to menaquinol (MKH2) and the conversion of 2-polyprenyl-6-methoxy-1,4-benzoquinol (DDMQH2) to 2-polyprenyl-3-methyl-6-methoxy-1,4-benzoquinol (DMQH2). This is Ubiquinone/menaquinone biosynthesis C-methyltransferase UbiE from Stenotrophomonas maltophilia (strain R551-3).